The sequence spans 390 residues: Tryptophan synthase beta chain (390 aa).

Lys-90 is subject to N6-(pyridoxal phosphate)lysine.

The protein belongs to the TrpB family. As to quaternary structure, tetramer of two alpha and two beta chains. Pyridoxal 5'-phosphate serves as cofactor.

The enzyme catalyses (1S,2R)-1-C-(indol-3-yl)glycerol 3-phosphate + L-serine = D-glyceraldehyde 3-phosphate + L-tryptophan + H2O. The protein operates within amino-acid biosynthesis; L-tryptophan biosynthesis; L-tryptophan from chorismate: step 5/5. Functionally, the beta subunit is responsible for the synthesis of L-tryptophan from indole and L-serine. The chain is Tryptophan synthase beta chain from Bacteroides fragilis (strain ATCC 25285 / DSM 2151 / CCUG 4856 / JCM 11019 / LMG 10263 / NCTC 9343 / Onslow / VPI 2553 / EN-2).